A 664-amino-acid chain; its full sequence is Intraflagellar transport protein 70A2 (664 aa).

TPR repeat units follow at residues 11–44, 45–78, 153–186, 188–220, 395–423, 424–456, and 458–491; these read DGEF…SSRS, RAGL…HPEL, PDGL…SGYQ, DVSY…GIRQ, QVQE…EKYI, PVLM…CNDH, and VWKL…NYDN. Positions 507–534 form a coiled coil; sequence YIMTSQNEEAEELMRKIEKEEEQLSYGD. Residues 543 to 576 form a TPR 8 repeat; the sequence is CIVNLVIGTLYCAKGNYDFGISRVIKSLEPYHKK.

This sequence belongs to the TTC30/dfy-1/fleer family. As to quaternary structure, interacts wit the IFT B complex component IFT52.

The protein resides in the cell projection. Its subcellular location is the cilium. Its function is as follows. Required for polyglutamylation of axonemal tubulin. Plays a role in anterograde intraflagellar transport (IFT), the process by which cilia precursors are transported from the base of the cilium to the site of their incorporation at the tip. The sequence is that of Intraflagellar transport protein 70A2 (Ift70a2) from Mus musculus (Mouse).